Consider the following 351-residue polypeptide: Purine permease 3 (351 aa).

The next 10 helical transmembrane spans lie at 4–24 (ALVI…PLIM), 35–55 (IWFS…PLLF), 72–92 (FFLI…LSGF), 108–128 (TAAL…FFMV), 132–152 (FTPF…VLGM), 168–188 (ITGF…LPLV), 207–227 (FQLI…FIAG), 249–269 (VAVF…GLIF), 274–294 (LVSG…AVIF), and 304–324 (GLSL…EIKS). Residues 45-152 (GFPVIFIPLL…LTVGAAVLGM (108 aa)) form the EamA domain. Residues 329–351 (RRIQQEESQETEQSSLSRPISEC) form a disordered region.

The protein belongs to the purine permeases (TC 2.A.7.14) family. As to expression, restricted to pollen.

It is found in the membrane. Its function is as follows. May be involved in transport of purine derivatives during pollen germination and tube elongation. In Arabidopsis thaliana (Mouse-ear cress), this protein is Purine permease 3 (PUP3).